Here is a 360-residue protein sequence, read N- to C-terminus: MLKKLAVCLSIVLLLLGAASPISAHTVYPVNPNAQQTTKDIMNWLAHLPNRSENRVMSGAFGGYSDVTFSMTEENRLKNATGQSPAIYGCDYGRGWLETADITDTIDYCCNSSLISYWKSGGLPQVSLHLANPAFPSGNYKTAISNSQYKNILDPSTVEGKRLEALLSKIADGLTQLKNQGVTVLFRPLHEMNGEWFWWGLTGYNQKDNERISLYKELYKKIYRYMTETRGLDNLLWVYSPDANRDFKTDFYPGSSYVDITGLDAYFTDPYAISGYDEMLSLKKPFAFAETGPSGNIGSFDYAAFINAIRQKYPQTTYFLTWDEQLSPAANQGAQSLYQNSWTLNKGEIWNGGSLTPIAE.

The signal sequence occupies residues 1–24; that stretch reads MLKKLAVCLSIVLLLLGAASPISA. Residues 36 to 347 enclose the GH26 domain; the sequence is QTTKDIMNWL…YQNSWTLNKG (312 aa). Histidine 129 serves as a coordination point for substrate. The active-site Proton donor is the glutamate 191. Substrate-binding residues include tryptophan 196 and tyrosine 266. Glutamate 290 (nucleophile) is an active-site residue.

This sequence belongs to the glycosyl hydrolase 26 family. In terms of assembly, homodimer.

The protein localises to the secreted. It catalyses the reaction Random hydrolysis of (1-&gt;4)-beta-D-mannosidic linkages in mannans, galactomannans and glucomannans.. Functionally, involved in the degradation of glucomannan. Catalyzes the endo hydrolysis of beta-1,4-linked mannan, galactomannan and glucomannan. This chain is Mannan endo-1,4-beta-mannosidase, found in Bacillus subtilis.